The chain runs to 123 residues: Integration host factor subunit alpha (123 aa).

A disordered region spans residues 97–123 (NANGTASSMSSSANAAAGDKSESASGT). A compositionally biased stretch (low complexity) spans 102–113 (ASSMSSSANAAA).

This sequence belongs to the bacterial histone-like protein family. Heterodimer of an alpha and a beta chain.

In terms of biological role, this protein is one of the two subunits of integration host factor, a specific DNA-binding protein that functions in genetic recombination as well as in transcriptional and translational control. In Rhodopseudomonas palustris (strain HaA2), this protein is Integration host factor subunit alpha.